A 218-amino-acid polypeptide reads, in one-letter code: Variable small protein 8 (218 aa).

The N-terminal stretch at 1 to 18 (MRKRISAIIMTLFMVFMS) is a signal peptide. The N-palmitoyl cysteine moiety is linked to residue cysteine 19. Residue cysteine 19 is the site of S-diacylglycerol cysteine attachment.

The protein belongs to the variable small protein (Vsp) family.

Its subcellular location is the cell outer membrane. In terms of biological role, the Vlp and Vsp proteins are antigenically distinct proteins, only one vlp or vsp gene is transcriptionally active at any one time. Switching between these genes is a mechanism of host immune response evasion. This Borrelia hermsii protein is Variable small protein 8.